Reading from the N-terminus, the 340-residue chain is Phosphoribosylformylglycinamidine cyclo-ligase (340 aa).

Belongs to the AIR synthase family.

It localises to the cytoplasm. The enzyme catalyses 2-formamido-N(1)-(5-O-phospho-beta-D-ribosyl)acetamidine + ATP = 5-amino-1-(5-phospho-beta-D-ribosyl)imidazole + ADP + phosphate + H(+). The protein operates within purine metabolism; IMP biosynthesis via de novo pathway; 5-amino-1-(5-phospho-D-ribosyl)imidazole from N(2)-formyl-N(1)-(5-phospho-D-ribosyl)glycinamide: step 2/2. This Streptococcus gordonii (strain Challis / ATCC 35105 / BCRC 15272 / CH1 / DL1 / V288) protein is Phosphoribosylformylglycinamidine cyclo-ligase.